We begin with the raw amino-acid sequence, 352 residues long: Dolichol-phosphate mannosyltransferase (352 aa).

Over 1 to 229 the chain is Cytoplasmic; that stretch reads MKVSVIIPTY…HIYRLMKWEG (229 aa). 14 residues coordinate GDP-alpha-D-mannose: P8, Y10, E12, V37, D39, D89, A90, D91, Q93, R117, V156, K178, R202, and K208. Residues D91 and Q93 each contribute to the Mg(2+) site. Residues D91 and Q93 each coordinate Mn(2+). A helical transmembrane segment spans residues 230-256; that stretch reads EIDRIVKFSIVGLSGILVNEGFLWLFV. Over 257 to 261 the chain is Extracellular; the sequence is NLGIP. A helical membrane pass occupies residues 262-286; it reads KEIAVIPAVELSILNNFFWNDIWTF. Over 287–293 the chain is Cytoplasmic; the sequence is KDIRRGS. A helical membrane pass occupies residues 294 to 320; that stretch reads IFSRLLKFHIAALSGAVVNFIVYWILL. The Extracellular segment spans residues 321–325; that stretch reads FLGIH. A helical transmembrane segment spans residues 326–350; that stretch reads YLIANLVGIVLSFGVRYVINRHVTW. Topologically, residues 351 to 352 are cytoplasmic; the sequence is AT.

Belongs to the glycosyltransferase 2 family. Mg(2+) is required as a cofactor. Mn(2+) serves as cofactor. It depends on Ca(2+) as a cofactor.

It localises to the cell membrane. The enzyme catalyses a di-trans,poly-cis-dolichyl phosphate + GDP-alpha-D-mannose = a di-trans,poly-cis-dolichyl beta-D-mannosyl phosphate + GDP. Its pathway is protein modification; protein glycosylation. Its function is as follows. Transfers mannose from GDP-mannose to dolichol monophosphate to form dolichol phosphate mannose (Dol-P-Man) which is the mannosyl donor in pathways leading to N-glycosylation, glycosyl phosphatidylinositol membrane anchoring, and O-mannosylation of proteins. The protein is Dolichol-phosphate mannosyltransferase of Pyrococcus furiosus (strain ATCC 43587 / DSM 3638 / JCM 8422 / Vc1).